The following is a 267-amino-acid chain: Mannose-specific lectin 1 (267 aa).

A signal peptide spans 1–26 (MAKLLLFLLPAILGLLVPPRSWSAVA). Bulb-type lectin domains lie at 29-134 (TNYL…PSVP) and 148-255 (NNLL…PQAK). Beta-D-mannose is bound by residues 54 to 58 (QDDCN), Tyr62, Trp66, Gln67, 173 to 177 (QGDCN), Tyr181, and 185 to 188 (YGWQ). The Carbohydrate-binding motif 1 motif lies at 54–62 (QDDCNLVLY). 2 disulfides stabilise this stretch: Cys57/Cys77 and Cys176/Cys198. Residues 173 to 181 (QGDCNLVLY) carry the Carbohydrate-binding motif 2 motif.

In terms of assembly, forms heterotetramer of 2 chains 1 and 2 chains 2 arranged as a dimer of chain 1 and chain 2 heterodimers.

Its subcellular location is the secreted. In terms of biological role, mannose-specific lectin. Shows agglutinating activity towards erythrocytes from rabbit. This Colocasia esculenta (Wild taro) protein is Mannose-specific lectin 1.